The following is a 123-amino-acid chain: Acidic phospholipase A2 (123 aa).

Intrachain disulfides connect Cys26-Cys116, Cys28-Cys44, Cys43-Cys95, Cys49-Cys123, Cys50-Cys88, Cys57-Cys81, and Cys75-Cys86. Ca(2+) is bound by residues Tyr27, Gly29, and Gly31. His47 is an active-site residue. Asp48 contributes to the Ca(2+) binding site. Asp89 is an active-site residue.

This sequence belongs to the phospholipase A2 family. Group II subfamily. D49 sub-subfamily. As to quaternary structure, homodimer. Ca(2+) serves as cofactor. As to expression, expressed by the venom gland.

It localises to the secreted. It catalyses the reaction a 1,2-diacyl-sn-glycero-3-phosphocholine + H2O = a 1-acyl-sn-glycero-3-phosphocholine + a fatty acid + H(+). Snake venom phospholipase A2 (PLA2) that inhibits ADP-induced platelet aggregation. PLA2 catalyzes the calcium-dependent hydrolysis of the 2-acyl groups in 3-sn-phosphoglycerides. This is Acidic phospholipase A2 from Deinagkistrodon acutus (Hundred-pace snake).